A 91-amino-acid chain; its full sequence is Small ribosomal subunit protein bS16 (91 aa).

It belongs to the bacterial ribosomal protein bS16 family. As to quaternary structure, part of the 30S ribosomal subunit.

Its function is as follows. Binds to the lower part of the body of the 30S subunit, where it stabilizes two of its domains. This Thermus thermophilus protein is Small ribosomal subunit protein bS16.